Reading from the N-terminus, the 307-residue chain is Pantothenate kinase (307 aa).

90 to 97 (GSVAVGKS) is an ATP binding site.

It belongs to the prokaryotic pantothenate kinase family.

It is found in the cytoplasm. The catalysed reaction is (R)-pantothenate + ATP = (R)-4'-phosphopantothenate + ADP + H(+). It functions in the pathway cofactor biosynthesis; coenzyme A biosynthesis; CoA from (R)-pantothenate: step 1/5. This Limosilactobacillus fermentum (strain NBRC 3956 / LMG 18251) (Lactobacillus fermentum) protein is Pantothenate kinase.